A 1241-amino-acid polypeptide reads, in one-letter code: MRSRSNSGVRLDGYARLVHQTILCHQNPVTGLLPASYDQKDAWVRDNVYSILAVWGLGLAYRKNADRDEDKAKAYELEQSVVKLMRGLLHCMIRQVDKVESFKYSQSTKDSLHAKYNTKTCATVVGDDQWGHLQLDATSVYLLFLAQMTASGLHIIHSLDEVNFIQNLVFYIEAAYKTADFGIWERGDKTNQGISELNASSVGMAKAALEALDELDLFGVKGGPQSVIHVLADEVQHCQSILNSLLPRASTSKEVDASLLSVVSFPAFAVEDSHLVELTKQEIITKLQGRYGCCRFLRDGYKTPKEDPNRLYYEPAELKLFENIECEWPLFWTYFILDGIFSGNVEQVQEYREALDAVLIKGKNGVPLLPELYSVPPDRVDEEYQNPHTVDRVPMGKLPHMWGQSLYILGSLMAEGFLAPGEIDPLNRRFSTVPKPDVVVQVSILAETEEIKAILKDKGIDVETIAEVYPIRVQPARILSHIYSSLGCNSRMKLSGRPYRLMGVLGTSKLYDIRKTIFTFTPQFIDQQQFYLALDNQMIVEMLRTDLSYLCSRWRMTGQPTITFPISHTMLDEDGTSLNSSILAALRKMQDGYFGGARIQTGKLSEFLTTSCCTHLSFMDPGPEGKLYSEDYDEDYEDDLDSGNWMDSYDSTSNARCGDEVARYLDRLLAHTVPHPKLAPTSRKGGLDRFRAAVQTTCDLMSLVAKAKELHIQNVHMYLPTKLFQPSRPSLNLLDSPESPQDSQVPSVHVEVHLPRDQSGEVDFQSLVSQLKETSSLQEQADILYMLYSMKGPDWNTELYEEGGATVRELLSELYVKVGEIRHWGLIRYISGILRKKVEALDEACTDLLSYQKHLTVGLPPEPREKTISAPLPYEALTKLIDEASEGDMSISTLTQEIMVYLAMYMRTQPGLFAEMFRLRIGLIIQVMATELAHSLRCSAEEATEGLMNLSPSAMKNLLHHILSGKEFGVERSVRPTDSNVSPAISIHEIGAVGATKTERTGIMQLKSEIKQVEFRRLSVSMESQTSGGHPSGVDLMSPSFLSPAACIAASSGSFPTVCDHQTSKDSRQGQWQRRRRLDGALNRVPIGFYQKVWKILQKCHGLSVEGFVLPSSTTREMTPGEIKFSVHVESVLNRVPQPEYRQLLVEAILVLTMLADIEIHSIGSIIAVEKIVHIANDLFLQEQKTLGADDTMLAKDPASGICTLLYDSAPSGRFGTMTYLSKAAATYVQEFLPHSLCAMQ.

9 positions are modified to phosphoserine: serine 629, serine 730, serine 736, serine 739, serine 759, serine 812, serine 973, serine 982, and serine 986. The tract at residues 811–841 (LSELYVKVGEIRHWGLIRYISGILRKKVEAL) is calmodulin-binding. Phosphoserine; by autocatalysis is present on serine 1008. Serine 1019 is subject to Phosphoserine; by PKA. Phosphoserine is present on residues serine 1021 and serine 1024. Residues 1064-1104 (SKDSRQGQWQRRRRLDGALNRVPIGFYQKVWKILQKCHGLS) form a calmodulin-binding region. Serine 1131 is modified (phosphoserine). A lipid anchor (S-farnesyl cysteine) is attached at cysteine 1238.

It belongs to the phosphorylase b kinase regulatory chain family. Hexadecamer of 4 heterotetramers, each composed of alpha, beta, gamma, and delta subunits. Alpha (PHKA1 or PHKA2) and beta (PHKB) are regulatory subunits, gamma (PHKG1 or PHKG2) is the catalytic subunit, and delta is calmodulin. Although the final Cys may be farnesylated, the terminal tripeptide is probably not removed, and the C-terminus is not methylated. Both isoforms are expressed in muscle.

It is found in the cell membrane. It functions in the pathway glycan biosynthesis; glycogen metabolism. With respect to regulation, by phosphorylation of various serine residues and by calcium. Its function is as follows. Phosphorylase b kinase catalyzes the phosphorylation of serine in certain substrates, including troponin I. The alpha chain may bind calmodulin. The chain is Phosphorylase b kinase regulatory subunit alpha, skeletal muscle isoform (Phka1) from Mus musculus (Mouse).